A 130-amino-acid polypeptide reads, in one-letter code: Small ribosomal subunit protein uS9 (130 aa).

Residues 105–130 (TRDPRMKERKKYGLKKARRAPQFSKR) are disordered. Residues 111–130 (KERKKYGLKKARRAPQFSKR) are compositionally biased toward basic residues.

It belongs to the universal ribosomal protein uS9 family.

The polypeptide is Small ribosomal subunit protein uS9 (Acetivibrio thermocellus (strain ATCC 27405 / DSM 1237 / JCM 9322 / NBRC 103400 / NCIMB 10682 / NRRL B-4536 / VPI 7372) (Clostridium thermocellum)).